A 224-amino-acid polypeptide reads, in one-letter code: MGRRPARCYRQIKNKPYPKSRYCRGVPDPKIRIYDVGMKKKGVDEFPYCVHLVSWEKENVSSEALEAARIACNKYMTKNAGKDAFHLRVRVHPFHVLRINKMLSCAGADRLQTGMRGAFGKPQGTCARVDIGQVLLSVRCKESNAKHAEEALRRAKFKFPGRQKIIHSRKWGFTKFTREEYVKLKAEGRIMSDGVNAQLLGSHGRLAKRAPGKAFLAETIQASA.

This sequence belongs to the universal ribosomal protein uL16 family. In terms of assembly, component of the small ribosomal subunit. Mature ribosomes consist of a small (40S) and a large (60S) subunit. The 40S subunit contains about 33 different proteins and 1 molecule of RNA (18S). The 60S subunit contains about 49 different proteins and 3 molecules of RNA (25S, 5.8S and 5S).

The protein is Large ribosomal subunit protein uL16z (SC34) of Oryza sativa subsp. indica (Rice).